Reading from the N-terminus, the 833-residue chain is Leucine--tRNA ligase (833 aa).

The 'HIGH' region signature appears at 41 to 52 (PYPSGAGLHVGH). The 'KMSKS' region motif lies at 610–614 (KMSKS). An ATP-binding site is contributed by lysine 613.

The protein belongs to the class-I aminoacyl-tRNA synthetase family.

It localises to the cytoplasm. The enzyme catalyses tRNA(Leu) + L-leucine + ATP = L-leucyl-tRNA(Leu) + AMP + diphosphate. The polypeptide is Leucine--tRNA ligase (Streptococcus pneumoniae (strain ATCC 700669 / Spain 23F-1)).